Reading from the N-terminus, the 447-residue chain is UPF0210 protein LSEI_0897 (447 aa).

Belongs to the UPF0210 family. In terms of assembly, homodimer.

This is UPF0210 protein LSEI_0897 from Lacticaseibacillus paracasei (strain ATCC 334 / BCRC 17002 / CCUG 31169 / CIP 107868 / KCTC 3260 / NRRL B-441) (Lactobacillus paracasei).